A 566-amino-acid polypeptide reads, in one-letter code: Folate-like transporter DDB_G0272544 (566 aa).

A coiled-coil region spans residues 24–81 (RNQDEDENENENNDNLENDNNKRNYISINNYEPYKEIDNNNNKNNNNNNIINNNNKIN). A disordered region spans residues 25-46 (NQDEDENENENNDNLENDNNKR). The span at 27–40 (DEDENENENNDNLE) shows a compositional bias: acidic residues. Helical transmembrane passes span 148-168 (VFLL…IIII), 171-191 (VAKI…WMIL), 194-214 (ITEG…YFSL), 226-246 (VNAG…LLVE), 252-272 (VYLL…ALGF), 304-324 (IWSG…QNLF), 332-352 (SWNG…AIIP), 364-384 (GIIL…MGFG), 388-408 (VVSA…SPIV), 420-440 (IGVL…LVQS), and 458-478 (YGAC…FLFL). A coiled-coil region spans residues 517–544 (YNANIIDFENNNNNNNNNNNNNNNNNNN). Residues 526–556 (NNNNNNNNNNNNNNNNNNNNNNNNNNNNNNN) show a composition bias toward low complexity. Residues 526–566 (NNNNNNNNNNNNNNNNNNNNNNNNNNNNNNNVGIGGNDNFK) form a disordered region.

Belongs to the reduced folate carrier (RFC) transporter (TC 2.A.48) family.

It is found in the membrane. Functionally, folate transporter. The chain is Folate-like transporter DDB_G0272544 from Dictyostelium discoideum (Social amoeba).